A 412-amino-acid chain; its full sequence is Putative odorant receptor 85d (412 aa).

Topologically, residues 1–56 (MLTKKDTQSAKEQEKLKAIPLHSFLKYANVFYLSIGMMAYDHKYSQKWKEVLLHWT) are cytoplasmic. The chain crosses the membrane as a helical span at residues 57–77 (FIAQMVNLNTVLISELIYVFL). Topologically, residues 78-84 (AIGKGSN) are extracellular. A helical transmembrane segment spans residues 85-105 (FLEATMNLSFIGFVIVGDFKI). The Cytoplasmic segment spans residues 106–152 (WNISRQRKRLTQVVSRLEELHPQGLAQQEPYNIGHHLSGYSRYSKFY). A helical transmembrane segment spans residues 153 to 173 (FGMHMVLIWTYNLYWAVYYLV). Residues 174-219 (CDFWLGMRQFERMLPYYCWVPWDWSTGYSYYFMYISQNIGGQACLS) lie on the Extracellular side of the membrane. Residues 220-240 (GQLAADMLMCALVTLVVMHFI) traverse the membrane as a helical segment. Over 241–282 (RLSAHIESHVAGIGSFQHDLEFLQATVAYHQSLIHLCQDINE) the chain is Cytoplasmic. Residues 283 to 303 (IFGVSLLSNFVSSSFIICFVG) form a helical membrane-spanning segment. Residues 304-314 (FQMTIGSKIDN) lie on the Extracellular side of the membrane. Residues 315–335 (LVMLVLFLFCAMVQVFMIATH) traverse the membrane as a helical segment. The Cytoplasmic portion of the chain corresponds to 336 to 382 (AQRLVDASEQIGQAVYNHDWFRADLRYRKMLILIIKRAQQPSRLKAT). The helical transmembrane segment at 383 to 403 (MFLNISLVTVSDLLQLSYKFF) threads the bilayer. Topologically, residues 404 to 412 (ALLRTMYVN) are extracellular.

It belongs to the insect chemoreceptor superfamily. Heteromeric odorant receptor channel (TC 1.A.69) family. Or49a subfamily. As to quaternary structure, interacts with Orco. Complexes exist early in the endomembrane system in olfactory sensory neurons (OSNs), coupling these complexes to the conserved ciliary trafficking pathway. In terms of tissue distribution, expressed in olfactory sensory neurons in the maxillary palp.

Its subcellular location is the cell membrane. Its function is as follows. Odorant receptor which mediates acceptance or avoidance behavior, depending on its substrates. The odorant receptor repertoire encodes a large collection of odor stimuli that vary widely in identity, intensity, and duration. May form a complex with Orco to form odorant-sensing units, providing sensitive and prolonged odorant signaling and calcium permeability. The protein is Putative odorant receptor 85d (Or85d) of Drosophila melanogaster (Fruit fly).